We begin with the raw amino-acid sequence, 251 residues long: MSDSNLDGVLVLIPARMASTRLPGKPLADICGLPMIVQVAMRAREAAIGRVVVAVDETRVFDAVAAAGFEVVMTRVDHQSGSDRIFEALTKVDPEGKAKIIVNIQGDLPTIDPETVRAALRPLENEAVDIGTLTTEIDNEEDKTAPHIVKIIGSPISGNRLHALYFTRATAPYGQGPLYHHIGLYAYRRAALERFVSLGPSTLEKRESLEQLRALEAGMRIDAEVVDTVPLGVDTPADLEKARRILSAKSN.

It belongs to the KdsB family.

It localises to the cytoplasm. It catalyses the reaction 3-deoxy-alpha-D-manno-oct-2-ulosonate + CTP = CMP-3-deoxy-beta-D-manno-octulosonate + diphosphate. The protein operates within nucleotide-sugar biosynthesis; CMP-3-deoxy-D-manno-octulosonate biosynthesis; CMP-3-deoxy-D-manno-octulosonate from 3-deoxy-D-manno-octulosonate and CTP: step 1/1. It functions in the pathway bacterial outer membrane biogenesis; lipopolysaccharide biosynthesis. Activates KDO (a required 8-carbon sugar) for incorporation into bacterial lipopolysaccharide in Gram-negative bacteria. This is 3-deoxy-manno-octulosonate cytidylyltransferase from Rhizobium johnstonii (strain DSM 114642 / LMG 32736 / 3841) (Rhizobium leguminosarum bv. viciae).